The primary structure comprises 1360 residues: DNA mismatch repair protein Msh6 (1360 aa).

The tract at residues Met1 to Ala84 is disordered. Residues Ser14, Ser41, and Ser43 each carry the phosphoserine modification. A compositionally biased stretch (low complexity) spans Arg33–Ser51. Residue Lys70 is modified to N6-acetyllysine. Ser79, Ser91, Ser137, Ser200, Ser219, and Ser227 each carry phosphoserine. The 63-residue stretch at Pro92–Ser154 folds into the PWWP domain. The disordered stretch occupies residues Val195 to Pro362. Acidic residues-rich tracts occupy residues Glu198–Glu209 and Ser219–Glu230. Residues Arg240–Arg249 are compositionally biased toward basic residues. Phosphoserine is present on residues Ser252, Ser254, Ser256, and Ser261. The segment covering Val263–Gly273 has biased composition (basic and acidic residues). Position 269 is a phosphothreonine (Thr269). A phosphoserine mark is found at Ser274, Ser275, Ser279, Ser280, and Ser309. Residues Pro320–His351 show a composition bias toward polar residues. Position 488 is a phosphothreonine (Thr488). Lys504 carries the N6-acetyllysine modification. Phosphoserine is present on residues Ser830 and Ser935. The residue at position 1010 (Thr1010) is a Phosphothreonine. Gly1134–Ser1141 provides a ligand contact to ATP.

This sequence belongs to the DNA mismatch repair MutS family. Component of the DNA mismatch repair (MMR) complex composed at least of MSH2, MSH3, MSH6, PMS1 and MLH1. Heterodimer consisting of MSH2-MSH6 (MutS alpha). Forms a ternary complex with MutL alpha (MLH1-PMS1). Interacts with MCM9. Part of the BRCA1-associated genome surveillance complex (BASC), which contains BRCA1, MSH2, MSH6, MLH1, ATM, BLM, PMS2 and the RAD50-MRE11-NBS1 protein complex. This association could be a dynamic process changing throughout the cell cycle and within subnuclear domains. In terms of assembly, (Microbial infection) Interacts with herpes simplex virus 1 protein UL12. The N-terminus is blocked. Post-translationally, phosphorylated by PRKCZ, which may prevent MutS alpha degradation by the ubiquitin-proteasome pathway.

The protein resides in the nucleus. The protein localises to the chromosome. Functionally, component of the post-replicative DNA mismatch repair system (MMR). Heterodimerizes with MSH2 to form MutS alpha, which binds to DNA mismatches thereby initiating DNA repair. When bound, MutS alpha bends the DNA helix and shields approximately 20 base pairs, and recognizes single base mismatches and dinucleotide insertion-deletion loops (IDL) in the DNA. After mismatch binding, forms a ternary complex with the MutL alpha heterodimer, which is thought to be responsible for directing the downstream MMR events, including strand discrimination, excision, and resynthesis. ATP binding and hydrolysis play a pivotal role in mismatch repair functions. The ATPase activity associated with MutS alpha regulates binding similar to a molecular switch: mismatched DNA provokes ADP--&gt;ATP exchange, resulting in a discernible conformational transition that converts MutS alpha into a sliding clamp capable of hydrolysis-independent diffusion along the DNA backbone. This transition is crucial for mismatch repair. MutS alpha may also play a role in DNA homologous recombination repair. Recruited on chromatin in G1 and early S phase via its PWWP domain that specifically binds trimethylated 'Lys-36' of histone H3 (H3K36me3): early recruitment to chromatin to be replicated allowing a quick identification of mismatch repair to initiate the DNA mismatch repair reaction. This is DNA mismatch repair protein Msh6 from Homo sapiens (Human).